A 461-amino-acid chain; its full sequence is Argininosuccinate lyase (461 aa).

Belongs to the lyase 1 family. Argininosuccinate lyase subfamily.

The protein resides in the cytoplasm. It catalyses the reaction 2-(N(omega)-L-arginino)succinate = fumarate + L-arginine. It functions in the pathway amino-acid biosynthesis; L-arginine biosynthesis; L-arginine from L-ornithine and carbamoyl phosphate: step 3/3. The chain is Argininosuccinate lyase from Nitrosomonas europaea (strain ATCC 19718 / CIP 103999 / KCTC 2705 / NBRC 14298).